We begin with the raw amino-acid sequence, 286 residues long: Probable 4-deoxy-4-formamido-L-arabinose-phosphoundecaprenol deformylase ArnD (286 aa).

The region spanning 1-248 is the NodB homology domain; the sequence is MGTKLGVPNL…IAINEGINFC (248 aa).

Belongs to the polysaccharide deacetylase family. ArnD deformylase subfamily.

It catalyses the reaction 4-deoxy-4-formamido-alpha-L-arabinopyranosyl di-trans,octa-cis-undecaprenyl phosphate + H2O = 4-amino-4-deoxy-alpha-L-arabinopyranosyl di-trans,octa-cis-undecaprenyl phosphate + formate. It functions in the pathway glycolipid biosynthesis; 4-amino-4-deoxy-alpha-L-arabinose undecaprenyl phosphate biosynthesis; 4-amino-4-deoxy-alpha-L-arabinose undecaprenyl phosphate from UDP-4-deoxy-4-formamido-beta-L-arabinose and undecaprenyl phosphate: step 2/2. The protein operates within bacterial outer membrane biogenesis; lipopolysaccharide biosynthesis. Functionally, catalyzes the deformylation of 4-deoxy-4-formamido-L-arabinose-phosphoundecaprenol to 4-amino-4-deoxy-L-arabinose-phosphoundecaprenol. The modified arabinose is attached to lipid A and is required for resistance to polymyxin and cationic antimicrobial peptides. This is Probable 4-deoxy-4-formamido-L-arabinose-phosphoundecaprenol deformylase ArnD from Wigglesworthia glossinidia brevipalpis.